The sequence spans 158 residues: Transcription elongation factor GreA (158 aa).

Residues 53–73 (EQQSFIEGRIQEIEGKLSNAQ) are a coiled coil.

This sequence belongs to the GreA/GreB family.

Necessary for efficient RNA polymerase transcription elongation past template-encoded arresting sites. The arresting sites in DNA have the property of trapping a certain fraction of elongating RNA polymerases that pass through, resulting in locked ternary complexes. Cleavage of the nascent transcript by cleavage factors such as GreA or GreB allows the resumption of elongation from the new 3'terminus. GreA releases sequences of 2 to 3 nucleotides. The protein is Transcription elongation factor GreA of Halorhodospira halophila (strain DSM 244 / SL1) (Ectothiorhodospira halophila (strain DSM 244 / SL1)).